A 334-amino-acid polypeptide reads, in one-letter code: Large ribosomal subunit protein uL3 (334 aa).

Basic residues predominate over residues 1-10 (MGMKKNRPRR). The interval 1–21 (MGMKKNRPRRGSLAFSPRKRA) is disordered.

This sequence belongs to the universal ribosomal protein uL3 family. In terms of assembly, part of the 50S ribosomal subunit. Forms a cluster with proteins L14 and L24e.

One of the primary rRNA binding proteins, it binds directly near the 3'-end of the 23S rRNA, where it nucleates assembly of the 50S subunit. The chain is Large ribosomal subunit protein uL3 from Methanococcus maripaludis (strain C5 / ATCC BAA-1333).